Reading from the N-terminus, the 536-residue chain is GMP synthase [glutamine-hydrolyzing] (536 aa).

In terms of domain architecture, Glutamine amidotransferase type-1 spans Arg19–Ser212. Catalysis depends on Cys96, which acts as the Nucleophile. Active-site residues include His186 and Glu188. Residues Trp213–Arg411 form the GMPS ATP-PPase domain. Ser240–Ser246 is a binding site for ATP.

Homodimer.

It catalyses the reaction XMP + L-glutamine + ATP + H2O = GMP + L-glutamate + AMP + diphosphate + 2 H(+). It functions in the pathway purine metabolism; GMP biosynthesis; GMP from XMP (L-Gln route): step 1/1. Its function is as follows. Catalyzes the synthesis of GMP from XMP. The sequence is that of GMP synthase [glutamine-hydrolyzing] from Psychrobacter arcticus (strain DSM 17307 / VKM B-2377 / 273-4).